The primary structure comprises 244 residues: Small ribosomal subunit protein eS4 (244 aa).

Residues 43-106 enclose the S4 RNA-binding domain; sequence LPLLLVVRDV…DENYLVLFDE (64 aa).

The protein belongs to the eukaryotic ribosomal protein eS4 family.

The sequence is that of Small ribosomal subunit protein eS4 from Methanococcus maripaludis (strain C5 / ATCC BAA-1333).